A 266-amino-acid polypeptide reads, in one-letter code: Glucosamine-6-phosphate deaminase (266 aa).

D72 serves as the catalytic Proton acceptor; for enolization step. Residue D141 is the For ring-opening step of the active site. The active-site Proton acceptor; for ring-opening step is the H143. The For ring-opening step role is filled by E148.

It belongs to the glucosamine/galactosamine-6-phosphate isomerase family. NagB subfamily. As to quaternary structure, homohexamer; trimer of disulfide-linked dimers.

It catalyses the reaction alpha-D-glucosamine 6-phosphate + H2O = beta-D-fructose 6-phosphate + NH4(+). It functions in the pathway amino-sugar metabolism; N-acetylneuraminate degradation; D-fructose 6-phosphate from N-acetylneuraminate: step 5/5. With respect to regulation, allosterically activated by N-acetylglucosamine 6-phosphate (GlcNAc6P). In terms of biological role, catalyzes the reversible isomerization-deamination of glucosamine 6-phosphate (GlcN6P) to form fructose 6-phosphate (Fru6P) and ammonium ion. The chain is Glucosamine-6-phosphate deaminase from Shigella dysenteriae serotype 1 (strain Sd197).